The chain runs to 254 residues: Fructose-1,6-bisphosphatase (254 aa).

Mg(2+) is bound by residues glutamate 68, aspartate 84, leucine 86, and aspartate 87. Residues 87 to 89 (DGS), arginine 171, isoleucine 176, and arginine 195 each bind substrate. Aspartate 202 serves as a coordination point for Mg(2+).

It belongs to the inositol monophosphatase superfamily. FBPase class 4 family. In terms of assembly, homodimer. Mg(2+) serves as cofactor.

It catalyses the reaction beta-D-fructose 1,6-bisphosphate + H2O = beta-D-fructose 6-phosphate + phosphate. With respect to regulation, inhibited by Li(+), ADP, ATP and glucose-6-phosphate. Catalyzes the conversion of D-fructose 1,6-bisphosphate to D-fructose 6-phosphate. In vitro, also has weak activity with inositol-1-phosphate, glucose-1-phosphate and glycerol-2-phosphate. This chain is Fructose-1,6-bisphosphatase, found in Pyrococcus furiosus (strain ATCC 43587 / DSM 3638 / JCM 8422 / Vc1).